The chain runs to 389 residues: Phosphoglycerate kinase (389 aa).

Residues 21-23 (DLN), Arg36, 59-62 (HLGR), Arg112, and Arg145 each bind substrate. ATP contacts are provided by residues Lys196, Glu313, and 342–345 (GGDT).

It belongs to the phosphoglycerate kinase family. As to quaternary structure, monomer.

Its subcellular location is the cytoplasm. The catalysed reaction is (2R)-3-phosphoglycerate + ATP = (2R)-3-phospho-glyceroyl phosphate + ADP. Its pathway is carbohydrate degradation; glycolysis; pyruvate from D-glyceraldehyde 3-phosphate: step 2/5. The chain is Phosphoglycerate kinase from Histophilus somni (strain 2336) (Haemophilus somnus).